A 496-amino-acid polypeptide reads, in one-letter code: UDP-N-acetylmuramoyl-L-alanyl-D-glutamate--2,6-diaminopimelate ligase (496 aa).

Residue Ser-32 participates in UDP-N-acetyl-alpha-D-muramoyl-L-alanyl-D-glutamate binding. 116-122 lines the ATP pocket; it reads GTNGKTT. Residues 158 to 159, Ser-185, Gln-191, and Arg-193 each bind UDP-N-acetyl-alpha-D-muramoyl-L-alanyl-D-glutamate; that span reads TT. Lys-225 carries the post-translational modification N6-carboxylysine. Meso-2,6-diaminopimelate contacts are provided by residues Arg-389, 413-416, Gly-464, and Glu-468; that span reads DNPR. A Meso-diaminopimelate recognition motif motif is present at residues 413-416; that stretch reads DNPR.

It belongs to the MurCDEF family. MurE subfamily. Requires Mg(2+) as cofactor. Carboxylation is probably crucial for Mg(2+) binding and, consequently, for the gamma-phosphate positioning of ATP.

The protein localises to the cytoplasm. It catalyses the reaction UDP-N-acetyl-alpha-D-muramoyl-L-alanyl-D-glutamate + meso-2,6-diaminopimelate + ATP = UDP-N-acetyl-alpha-D-muramoyl-L-alanyl-gamma-D-glutamyl-meso-2,6-diaminopimelate + ADP + phosphate + H(+). The protein operates within cell wall biogenesis; peptidoglycan biosynthesis. Functionally, catalyzes the addition of meso-diaminopimelic acid to the nucleotide precursor UDP-N-acetylmuramoyl-L-alanyl-D-glutamate (UMAG) in the biosynthesis of bacterial cell-wall peptidoglycan. The protein is UDP-N-acetylmuramoyl-L-alanyl-D-glutamate--2,6-diaminopimelate ligase of Trichormus variabilis (strain ATCC 29413 / PCC 7937) (Anabaena variabilis).